Here is a 309-residue protein sequence, read N- to C-terminus: Probable porphobilinogen deaminase (309 aa).

An S-(dipyrrolylmethanemethyl)cysteine modification is found at Cys-233.

Belongs to the HMBS family. Dipyrromethane is required as a cofactor.

The catalysed reaction is 4 porphobilinogen + H2O = hydroxymethylbilane + 4 NH4(+). It functions in the pathway porphyrin-containing compound metabolism; protoporphyrin-IX biosynthesis; coproporphyrinogen-III from 5-aminolevulinate: step 2/4. Its function is as follows. Tetrapolymerization of the monopyrrole PBG into the hydroxymethylbilane pre-uroporphyrinogen in several discrete steps. This chain is Probable porphobilinogen deaminase, found in Methanococcoides burtonii (strain DSM 6242 / NBRC 107633 / OCM 468 / ACE-M).